Reading from the N-terminus, the 159-residue chain is Eukaryotic translation initiation factor 5A-5 (159 aa).

Over residues 1 to 12 (MSDEEHHFESKA) the composition is skewed to basic and acidic residues. Residues 1–23 (MSDEEHHFESKADAGASKTYPQQ) are disordered. Lys52 bears the Hypusine mark.

The protein belongs to the eIF-5A family. Post-translationally, lys-52 undergoes hypusination, a unique post-translational modification that consists in the addition of a butylamino group from spermidine to lysine side chain, leading to the formation of the unusual amino acid hypusine. eIF-5As are the only known proteins to undergo this modification, which is essential for their function.

Translation factor that promotes translation elongation and termination, particularly upon ribosome stalling at specific amino acid sequence contexts. Binds between the exit (E) and peptidyl (P) site of the ribosome and promotes rescue of stalled ribosome: specifically required for efficient translation of polyproline-containing peptides as well as other motifs that stall the ribosome. Acts as a ribosome quality control (RQC) cofactor by joining the RQC complex to facilitate peptidyl transfer during CAT tailing step. The chain is Eukaryotic translation initiation factor 5A-5 (EIF5A5) from Solanum tuberosum (Potato).